A 163-amino-acid polypeptide reads, in one-letter code: Protein-export protein SecB (163 aa).

Belongs to the SecB family. Homotetramer, a dimer of dimers. One homotetramer interacts with 1 SecA dimer.

The protein localises to the cytoplasm. One of the proteins required for the normal export of preproteins out of the cell cytoplasm. It is a molecular chaperone that binds to a subset of precursor proteins, maintaining them in a translocation-competent state. It also specifically binds to its receptor SecA. The sequence is that of Protein-export protein SecB from Methylibium petroleiphilum (strain ATCC BAA-1232 / LMG 22953 / PM1).